The sequence spans 198 residues: uncharacterized protein (198 aa).

The segment at 72–95 (ESEEQYDSDDDNDKLVLNDDEDDE) is disordered. Positions 75–94 (EQYDSDDDNDKLVLNDDEDD) are enriched in acidic residues. Residues 106-136 (EATNITNINKNIENIKNDMSNLNNMNDSNQK) adopt a coiled-coil conformation.

This is an uncharacterized protein from Plasmodium falciparum (isolate 3D7).